Consider the following 397-residue polypeptide: MNKQVYMDYSATTYTKPEVLEEMLPFFTENFGNPSSLYSFSDKTKKAVNLARERVSKALNAEKNEIFFTSGGSEADNWALKGIAYANKKKGNHIITTKIEHHAILHTAQFLEKEGFKVTYLPVDEEGFVSVEDIKNAITDETILVSVMFANNEIGTIEPIKEIGELCKEKNIYFHTDAVQAIGHVDIDVKDMNIDLLSMSAHKFYGPKGVGALYIKNGVKIQNLIHGGGQERGKRASTEDTAGIVGLGKAIELAMENMPEENEKLSNLRGRLIRGIEARIPEVKLNGPKDMSRRLPNNVNFSFIGIEGETLLLDLDMNGIFGSTGSACASASLDPSHVLLSIGLPHETAHGSLRLSLGAKNTEEDIDYVLEVLPKIIKQRREMSPLWEDYMKNKEEK.

Residues 72–73, asparagine 152, glutamine 180, and 200–202 contribute to the pyridoxal 5'-phosphate site; these read GS and SAH. Residue lysine 203 is modified to N6-(pyridoxal phosphate)lysine. Threonine 238 is a binding site for pyridoxal 5'-phosphate. The active-site Cysteine persulfide intermediate is the cysteine 328. A [2Fe-2S] cluster-binding site is contributed by cysteine 328.

It belongs to the class-V pyridoxal-phosphate-dependent aminotransferase family. NifS/IscS subfamily. Homodimer. Forms a heterotetramer with IscU, interacts with other sulfur acceptors. Requires pyridoxal 5'-phosphate as cofactor.

It is found in the cytoplasm. The catalysed reaction is (sulfur carrier)-H + L-cysteine = (sulfur carrier)-SH + L-alanine. It functions in the pathway cofactor biosynthesis; iron-sulfur cluster biosynthesis. Master enzyme that delivers sulfur to a number of partners involved in Fe-S cluster assembly, tRNA modification or cofactor biosynthesis. Catalyzes the removal of elemental sulfur atoms from cysteine to produce alanine. Functions as a sulfur delivery protein for Fe-S cluster synthesis onto IscU, an Fe-S scaffold assembly protein, as well as other S acceptor proteins. The protein is Cysteine desulfurase IscS of Clostridium botulinum (strain Kyoto / Type A2).